The sequence spans 487 residues: L-tartrate/succinate antiporter (487 aa).

Over 1-9 the chain is Periplasmic; it reads MKPSTEWWR. The chain crosses the membrane as a helical span at residues 10–30; it reads YLAPLAVIAIIALLPVPAGLE. Over 31 to 32 the chain is Cytoplasmic; the sequence is NH. The next 2 helical transmembrane spans lie at 33-53 and 54-74; these read TWLY…EPVP and GAVV…WLLF. At 75 to 92 the chain is on the cytoplasmic side; that stretch reads SPEQLAQPGFKFTAKSLS. A helical transmembrane segment spans residues 93 to 113; it reads WAVSGFSNSVIWLIFAAFMFG. The Periplasmic portion of the chain corresponds to 114–136; it reads TGYEKTGLGRRIALILVKKMGHR. A helical transmembrane segment spans residues 137–157; that stretch reads TLFLGYAVMFSELILAPVTPS. At 158–188 the chain is on the cytoplasmic side; sequence NSARGAGIIYPIIRNLPPLYQSQPNDSSSRS. Residues 189–209 form a helical membrane-spanning segment; it reads IGSYIMWMGIVADCVTSAIFL. Over 210–235 the chain is Periplasmic; that stretch reads TAMAPNLLLIGLMKSASHATLSWGDW. The chain crosses the membrane as a helical span at residues 236-256; sequence FLGMLPLSILLVLLVPWLAYV. At 257-291 the chain is on the cytoplasmic side; the sequence is LYPPVLKSGDQVPRWAETELQAMGPLCSREKRMLG. A run of 2 helical transmembrane segments spans residues 292–312 and 313–333; these read LMVG…AAMV and GYSV…DIVS. Residues 334-339 are Cytoplasmic-facing; it reads NKAAWN. The helical transmembrane segment at 340–360 threads the bilayer; the sequence is VFFWLASLITLATGLNNTGFI. The Periplasmic segment spans residues 361–369; sequence SWFGKLLAG. Residues 370-390 traverse the membrane as a helical segment; the sequence is SLSGYSPTMVMVALIVVFYLL. Topologically, residues 391–392 are cytoplasmic; it reads RY. The helical transmembrane segment at 393–413 threads the bilayer; that stretch reads FFASATAYTSALAPMMIAAAL. The Periplasmic segment spans residues 414–417; it reads AMPE. A helical membrane pass occupies residues 418-438; sequence IPLPVFCLMVGAAIGLGSILT. Residues 439–464 are Cytoplasmic-facing; it reads PYATGPSPIYYGSGYLPTADYWRLGA. The helical transmembrane segment at 465–485 threads the bilayer; sequence IFGLIFLVLLVITGLLWMPVV. Topologically, residues 486–487 are periplasmic; the sequence is LL.

The protein belongs to the SLC13A/DASS transporter (TC 2.A.47) family. DIT1 subfamily.

It is found in the cell inner membrane. The catalysed reaction is (2R,3R)-tartrate(out) + succinate(in) = (2R,3R)-tartrate(in) + succinate(out). Functionally, catalyzes the uptake of tartrate in exchange for intracellular succinate. Essential for anaerobic L-tartrate fermentation. This is L-tartrate/succinate antiporter from Escherichia coli (strain K12).